The chain runs to 479 residues: Caspase-8 (479 aa).

The propeptide occupies 1–216 (MDFSRNLYDI…TISDSPREQD (216 aa)). DED domains lie at 2–80 (DFSR…TYLN) and 100–177 (AYRV…IIND). Phosphoserine occurs at positions 188 and 211. Lys224 bears the N6-acetyllysine mark. The active site involves His317. A Phosphotyrosine modification is found at Tyr334. Cys360 is a catalytic residue. Positions 375-384 (SEEQPYLEMD) are excised as a propeptide. Position 380 is a phosphotyrosine; by SRC (Tyr380). Ser387 is subject to Phosphoserine; by CDK1. Arg413 bears the (Microbial infection) ADP-riboxanated arginine mark.

The protein belongs to the peptidase C14A family. In terms of assembly, heterotetramer that consists of two anti-parallel arranged heterodimers, each one formed by a 18 kDa (p18) and a 10 kDa (p10) subunit. Component of the death-induced signaling complex (DISC) composed of cell surface receptor FAS/CD95 or TNFRSF1A, adapter protein FADD and the CASP8 protease; recruitment of CASP8 to the complex is required for processing of CASP8 into the p18 and p10 subunits. Component of the AIM2 PANoptosome complex, a multiprotein complex that drives inflammatory cell death (PANoptosis). Interacts with CFLAR and PEA15. Interacts with TNFAIP8L2. Interacts with CASP8AP2. Interacts with RFFL and RNF34; negatively regulate CASP8 through proteasomal degradation. Interacts with NOL3; decreases CASP8 activity in a mitochondria localization- and phosphorylation-dependent manner and this interaction is dissociated by calcium. Interacts with UBR2ca. Interacts with RIPK1. Interacts with stimulated TNFRSF10B; this interaction is followed by CASP8 proteolytic cleavage and activation. Interacts (phosphorylated on Tyr-380) with PIK3R1. As to quaternary structure, interacts at the endoplasmic reticulum with a complex containing BCAP31, BAP29, BCL2 and/or BCL2L1. (Microbial infection) Interacts with human cytomegalovirus/HHV-5 protein vICA/UL36; this interaction inhibits CASP8 activation. In terms of assembly, (Microbial infection) Interacts with NleF from pathogenic E.coli. As to quaternary structure, (Microbial infection) Interacts with molluscum contagiosum virus protein MC160. (Microbial infection) Interacts (via RIP homotypic interaction motif) with herpes simplex virus 1/HHV-1 protein RIR1/ICP6 (via RIP homotypic interaction motif); this interaction prevents necroptosis activation. In terms of assembly, (Microbial infection) Interacts (via RIP homotypic interaction motif) with herpes simplex virus 2/HHV-2 protein RIR1/ICP10 (via RIP homotypic interaction motif); this interaction prevents necroptosis activation. Generation of the p10 and p18 subunits requires association with the death-inducing signaling complex (DISC), whereas additional processing is likely due to the autocatalytic activity of the activated protease. GZMB and CASP10 can be involved in these processing events. Post-translationally, phosphorylation on Ser-387 during mitosis by CDK1 inhibits activation by proteolysis and prevents apoptosis. Phosphorylation on Tyr-380 by SRC is mediated by interaction with the SRC SH2 domain and does not affect dimerization or recruitment to the death-inducing signaling complex (DISC) but negatively regulates DISC-mediated processing and activation of CASP8, down-regulating its proapoptotic function. Phosphorylation on Tyr-380 also enhances localization to lamellipodia in migrating cells. In terms of processing, (Microbial infection) ADP-riboxanation by C.violaceum CopC blocks CASP8 processing, preventing CASP8 activation and ability to mediate extrinsic apoptosis. (Microbial infection) Proteolytically cleaved by the cowpox virus CRMA death inhibitory protein. As to expression, isoform 1, isoform 5 and isoform 7 are expressed in a wide variety of tissues. Highest expression in peripheral blood leukocytes, spleen, thymus and liver. Barely detectable in brain, testis and skeletal muscle.

The protein resides in the cytoplasm. It is found in the nucleus. It localises to the cell projection. The protein localises to the lamellipodium. The enzyme catalyses Strict requirement for Asp at position P1 and has a preferred cleavage sequence of (Leu/Asp/Val)-Glu-Thr-Asp-|-(Gly/Ser/Ala).. CASP8 activity is restricted by RIPK1. Inhibited by the effector protein NleF that is produced by pathogenic E.coli; this inhibits apoptosis. Its function is as follows. Thiol protease that plays a key role in programmed cell death by acting as a molecular switch for apoptosis, necroptosis and pyroptosis, and is required to prevent tissue damage during embryonic development and adulthood. Initiator protease that induces extrinsic apoptosis by mediating cleavage and activation of effector caspases responsible for FAS/CD95-mediated and TNFRSF1A-induced cell death. Cleaves and activates effector caspases CASP3, CASP4, CASP6, CASP7, CASP9 and CASP10. Binding to the adapter molecule FADD recruits it to either receptor FAS/TNFRSF6 or TNFRSF1A. The resulting aggregate called the death-inducing signaling complex (DISC) performs CASP8 proteolytic activation. The active dimeric enzyme is then liberated from the DISC and free to activate downstream apoptotic proteases. Proteolytic fragments of the N-terminal propeptide (termed CAP3, CAP5 and CAP6) are likely retained in the DISC. In addition to extrinsic apoptosis, also acts as a negative regulator of necroptosis: acts by cleaving RIPK1 at 'Asp-324', which is crucial to inhibit RIPK1 kinase activity, limiting TNF-induced apoptosis, necroptosis and inflammatory response. Also able to initiate pyroptosis by mediating cleavage and activation of gasdermin-C and -D (GSDMC and GSDMD, respectively): gasdermin cleavage promotes release of the N-terminal moiety that binds to membranes and forms pores, triggering pyroptosis. Initiates pyroptosis following inactivation of MAP3K7/TAK1. Also acts as a regulator of innate immunity by mediating cleavage and inactivation of N4BP1 downstream of TLR3 or TLR4, thereby promoting cytokine production. May participate in the Granzyme B (GZMB) cell death pathways. Cleaves PARP1 and PARP2. Independent of its protease activity, promotes cell migration following phosphorylation at Tyr-380. Lacks the catalytic site and may interfere with the pro-apoptotic activity of the complex. Functionally, lacks the catalytic site and may interfere with the pro-apoptotic activity of the complex. Acts as an inhibitor of the caspase cascade. The chain is Caspase-8 from Homo sapiens (Human).